The primary structure comprises 881 residues: Alanine--tRNA ligase (881 aa).

Zn(2+) is bound by residues His566, His570, Cys668, and His672.

Belongs to the class-II aminoacyl-tRNA synthetase family. Zn(2+) serves as cofactor.

It localises to the cytoplasm. The catalysed reaction is tRNA(Ala) + L-alanine + ATP = L-alanyl-tRNA(Ala) + AMP + diphosphate. Its function is as follows. Catalyzes the attachment of alanine to tRNA(Ala) in a two-step reaction: alanine is first activated by ATP to form Ala-AMP and then transferred to the acceptor end of tRNA(Ala). Also edits incorrectly charged Ser-tRNA(Ala) and Gly-tRNA(Ala) via its editing domain. The protein is Alanine--tRNA ligase of Frankia alni (strain DSM 45986 / CECT 9034 / ACN14a).